We begin with the raw amino-acid sequence, 253 residues long: Small ribosomal subunit protein eS6 (253 aa).

The interval 200–253 (KKRLAKRKQSENDYAKLLAQRKKESKVRRQEELKRRRSASMRDSKSSDKSAPQK) is disordered. Over residues 226–247 (VRRQEELKRRRSASMRDSKSSD) the composition is skewed to basic and acidic residues.

It belongs to the eukaryotic ribosomal protein eS6 family. Component of the small ribosomal subunit. Part of the small subunit (SSU) processome, composed of more than 70 proteins and the RNA chaperone small nucleolar RNA (snoRNA) U3. Ribosomal protein S6 is the major substrate of protein kinases in eukaryote ribosomes.

The protein localises to the cytoplasm. The protein resides in the nucleus. It localises to the nucleolus. Component of the 40S small ribosomal subunit. Plays an important role in controlling cell growth and proliferation through the selective translation of particular classes of mRNA. Part of the small subunit (SSU) processome, first precursor of the small eukaryotic ribosomal subunit. During the assembly of the SSU processome in the nucleolus, many ribosome biogenesis factors, an RNA chaperone and ribosomal proteins associate with the nascent pre-rRNA and work in concert to generate RNA folding, modifications, rearrangements and cleavage as well as targeted degradation of pre-ribosomal RNA by the RNA exosome. This is Small ribosomal subunit protein eS6 (RpS6) from Spodoptera frugiperda (Fall armyworm).